The primary structure comprises 278 residues: Protein D7 (278 aa).

2 CHHC U11-48K-type zinc fingers span residues 6-33 (LMQC…RENN) and 40-67 (LATC…EYRV). The Zn(2+) site is built by Cys9, His15, His25, Cys29, Cys43, His49, His59, and Cys63. The segment covering 149-164 (QVKQNQPEPEPFTSSE) has biased composition (polar residues). Disordered regions lie at residues 149 to 230 (QVKQ…PKAN) and 249 to 278 (PGGS…WVRK). Residues 165-175 (RNYDPRSKEPP) are compositionally biased toward basic and acidic residues. The segment covering 188–200 (ATTNTNPWCRQTG) has biased composition (polar residues). A compositionally biased stretch (basic and acidic residues) spans 214 to 225 (SSDEGPRNKEFP).

This sequence belongs to the UPF0224 (FAM112) family.

It localises to the cytoplasm. In terms of biological role, involved in oocyte maturation. It is possible that D7 is required at a certain point in the maturation process and that maturation cannot proceed beyond this point unless a threshold amount of D7 protein is provided. The chain is Protein D7 (d7) from Xenopus laevis (African clawed frog).